Here is a 359-residue protein sequence, read N- to C-terminus: Protein RecA (359 aa).

Residue Gly69–Thr76 coordinates ATP. Residues Ser337 to Glu359 form a disordered region. Acidic residues predominate over residues Glu346–Glu359.

This sequence belongs to the RecA family.

The protein localises to the cytoplasm. Its function is as follows. Can catalyze the hydrolysis of ATP in the presence of single-stranded DNA, the ATP-dependent uptake of single-stranded DNA by duplex DNA, and the ATP-dependent hybridization of homologous single-stranded DNAs. It interacts with LexA causing its activation and leading to its autocatalytic cleavage. The sequence is that of Protein RecA from Nostoc punctiforme (strain ATCC 29133 / PCC 73102).